The chain runs to 101 residues: Movement protein (101 aa).

The chain crosses the membrane as a helical span at residues 30–50 (EVAILSFVALICFYLLYLWVL). The tract at residues 75 to 101 (VDRSNPIPNLPAPPSQGNPGPFVPGTG) is disordered.

It belongs to the mastrevirus movement protein family. In terms of assembly, interacts with the capsid protein (CP). Part of a MP-CP-viral DNA complex.

Its subcellular location is the host membrane. Its function is as follows. Involved in the viral transport within, and between cells. The chain is Movement protein from Maize streak virus genotype A (isolate South Africa) (MSV).